The following is a 384-amino-acid chain: Farnesyl pyrophosphate synthase 1, mitochondrial (384 aa).

3 residues coordinate isopentenyl diphosphate: Lys-89, Arg-92, and Gln-128. 2 residues coordinate Mg(2+): Asp-135 and Asp-139. Dimethylallyl diphosphate is bound at residue Arg-144. Arg-145 serves as a coordination point for isopentenyl diphosphate. Dimethylallyl diphosphate is bound by residues Lys-232, Thr-233, Gln-271, Lys-288, and Lys-297.

This sequence belongs to the FPP/GGPP synthase family. It depends on Mg(2+) as a cofactor. The FPS1L mRNA accumulates preferentially in inflorescences, whereas the FPS1S mRNA is predominantly expressed in roots and inflorescences.

The protein resides in the mitochondrion. Its subcellular location is the cytoplasm. It carries out the reaction isopentenyl diphosphate + dimethylallyl diphosphate = (2E)-geranyl diphosphate + diphosphate. The enzyme catalyses isopentenyl diphosphate + (2E)-geranyl diphosphate = (2E,6E)-farnesyl diphosphate + diphosphate. It functions in the pathway isoprenoid biosynthesis; farnesyl diphosphate biosynthesis; farnesyl diphosphate from geranyl diphosphate and isopentenyl diphosphate: step 1/1. It participates in isoprenoid biosynthesis; geranyl diphosphate biosynthesis; geranyl diphosphate from dimethylallyl diphosphate and isopentenyl diphosphate: step 1/1. Its function is as follows. Catalyzes the sequential condensation of isopentenyl pyrophosphate with the allylic pyrophosphates, dimethylallyl pyrophosphate, and then with the resultant geranylpyrophosphate to the ultimate product farnesyl pyrophosphate. The chain is Farnesyl pyrophosphate synthase 1, mitochondrial (FPS1) from Arabidopsis thaliana (Mouse-ear cress).